A 407-amino-acid chain; its full sequence is Eukaryotic initiation factor 4A-II (407 aa).

The disordered stretch occupies residues 1–22; that stretch reads MSGGSADYNREHGGPEGMDPDG. A Q motif motif is present at residues 33–61; it reads DNFDDMNLKESLLRGIYAYGFEKPSAIQQ. The Helicase ATP-binding domain maps to 64–235; the sequence is IIPCIKGYDV…KKFMRDPIRI (172 aa). 77-84 serves as a coordination point for ATP; it reads AQSGTGKT. Residue threonine 159 is modified to Phosphothreonine. The DEAD box motif lies at 183 to 186; it reads DEAD. The 162-residue stretch at 246 to 407 folds into the Helicase C-terminal domain; sequence GIKQFYINVE…EMPMNVADLI (162 aa).

The protein belongs to the DEAD box helicase family. eIF4A subfamily. EIF4F is a multi-subunit complex, the composition of which varies with external and internal environmental conditions. It is composed of at least EIF4A, EIF4E and EIF4G1/EIFFG3. Interacts with EIF4E. May interact with NOM1.

It catalyses the reaction ATP + H2O = ADP + phosphate + H(+). In terms of biological role, ATP-dependent RNA helicase which is a subunit of the eIF4F complex involved in cap recognition and is required for mRNA binding to ribosome. In the current model of translation initiation, eIF4A unwinds RNA secondary structures in the 5'-UTR of mRNAs which is necessary to allow efficient binding of the small ribosomal subunit, and subsequent scanning for the initiator codon. The protein is Eukaryotic initiation factor 4A-II (EIF4A2) of Bos taurus (Bovine).